The following is a 147-amino-acid chain: Large ribosomal subunit protein uL13 (147 aa).

The protein belongs to the universal ribosomal protein uL13 family. As to quaternary structure, part of the 50S ribosomal subunit.

In terms of biological role, this protein is one of the early assembly proteins of the 50S ribosomal subunit, although it is not seen to bind rRNA by itself. It is important during the early stages of 50S assembly. The sequence is that of Large ribosomal subunit protein uL13 from Pseudarthrobacter chlorophenolicus (strain ATCC 700700 / DSM 12829 / CIP 107037 / JCM 12360 / KCTC 9906 / NCIMB 13794 / A6) (Arthrobacter chlorophenolicus).